Here is a 266-residue protein sequence, read N- to C-terminus: Probable dihydroorotate dehydrogenase B (NAD(+)), electron transfer subunit (266 aa).

The FAD-binding FR-type domain occupies 5–99 (NVPEVLEIKR…RGPYGRGFEL (95 aa)). Positions 217, 222, 225, and 235 each coordinate [2Fe-2S] cluster.

This sequence belongs to the PyrK family. In terms of assembly, heterotetramer of 2 PyrK and 2 PyrD type B subunits. [2Fe-2S] cluster serves as cofactor. It depends on FAD as a cofactor.

It functions in the pathway pyrimidine metabolism; UMP biosynthesis via de novo pathway; orotate from (S)-dihydroorotate (NAD(+) route): step 1/1. In terms of biological role, responsible for channeling the electrons from the oxidation of dihydroorotate from the FMN redox center in the PyrD type B subunit to the ultimate electron acceptor NAD(+). This is Probable dihydroorotate dehydrogenase B (NAD(+)), electron transfer subunit from Methanothermobacter thermautotrophicus (strain ATCC 29096 / DSM 1053 / JCM 10044 / NBRC 100330 / Delta H) (Methanobacterium thermoautotrophicum).